A 195-amino-acid polypeptide reads, in one-letter code: PRELI domain containing protein 3B (195 aa).

In terms of domain architecture, PRELI/MSF1 spans 1–172 (MKIWTSEHVF…VIHKLNAEIE (172 aa)). Residues Ser-46 and Ser-51 each carry the phosphoserine modification.

Belongs to the slowmo family.

The polypeptide is PRELI domain containing protein 3B (Prelid3b) (Rattus norvegicus (Rat)).